The primary structure comprises 489 residues: Serine/threonine-protein kinase BSK3 (489 aa).

Residue glycine 2 is the site of N-myristoyl glycine attachment. A Protein kinase domain is found at 58 to 324 (EYIVSEHGEK…ETEVLSHVLM (267 aa)). Residues 64 to 72 (HGEKAPNVV) and lysine 86 each bind ATP. Aspartate 180 (proton acceptor) is an active-site residue. Serine 212 carries the post-translational modification Phosphoserine.

It belongs to the protein kinase superfamily. Ser/Thr protein kinase family. Interacts with BRI1. In terms of processing, phosphorylated by BRI1 upon brassinolide (BL) treatment. Phosphorylated by ASK7/BIN2 and ASK9/BIL2.

Its subcellular location is the cell membrane. It carries out the reaction L-seryl-[protein] + ATP = O-phospho-L-seryl-[protein] + ADP + H(+). The enzyme catalyses L-threonyl-[protein] + ATP = O-phospho-L-threonyl-[protein] + ADP + H(+). Its function is as follows. Probable serine/threonine kinase that acts as a positive regulator of brassinosteroid (BR) signaling downstream of the receptor kinase BRI1. Mediates signal transduction from BRI1 by functioning as substrate of BRI1. Functions redundantly with BSK4, BSK6, BSK7 and BSK8. The protein is Serine/threonine-protein kinase BSK3 of Arabidopsis thaliana (Mouse-ear cress).